Here is a 251-residue protein sequence, read N- to C-terminus: 14-3-3-like protein (251 aa).

Belongs to the 14-3-3 family. In terms of tissue distribution, most abundant in roots and flowers.

This chain is 14-3-3-like protein, found in Nicotiana tabacum (Common tobacco).